The sequence spans 201 residues: Recombination protein RecR (201 aa).

The segment at 57–72 (CKLCQIYTEQPLCNIC) adopts a C4-type zinc-finger fold. A Toprim domain is found at 80-175 (TLLCVVESPA…KCSRIAHGVP (96 aa)).

The protein belongs to the RecR family.

In terms of biological role, may play a role in DNA repair. It seems to be involved in an RecBC-independent recombinational process of DNA repair. It may act with RecF and RecO. The sequence is that of Recombination protein RecR from Coxiella burnetii (strain RSA 493 / Nine Mile phase I).